The chain runs to 192 residues: Putative ripening-related protein 2 (192 aa).

An N-terminal signal peptide occupies residues 1 to 26 (MATTNCLLALAIAGLVLVSLPGLSRG).

It belongs to the kiwellin family.

It localises to the secreted. This is Putative ripening-related protein 2 from Oryza sativa subsp. japonica (Rice).